The following is a 189-amino-acid chain: GTP cyclohydrolase 1 (189 aa).

Zn(2+) contacts are provided by C76, H79, and C149.

This sequence belongs to the GTP cyclohydrolase I family. As to quaternary structure, homomer.

The catalysed reaction is GTP + H2O = 7,8-dihydroneopterin 3'-triphosphate + formate + H(+). It participates in cofactor biosynthesis; 7,8-dihydroneopterin triphosphate biosynthesis; 7,8-dihydroneopterin triphosphate from GTP: step 1/1. The polypeptide is GTP cyclohydrolase 1 (Dehalococcoides mccartyi (strain ATCC BAA-2100 / JCM 16839 / KCTC 5957 / BAV1)).